Consider the following 380-residue polypeptide: Alkanesulfonate monooxygenase (380 aa).

The protein belongs to the SsuD family. In terms of assembly, homotetramer.

It carries out the reaction an alkanesulfonate + FMNH2 + O2 = an aldehyde + FMN + sulfite + H2O + 2 H(+). Catalyzes the desulfonation of aliphatic sulfonates. The sequence is that of Alkanesulfonate monooxygenase from Pectobacterium atrosepticum (strain SCRI 1043 / ATCC BAA-672) (Erwinia carotovora subsp. atroseptica).